The chain runs to 208 residues: MHDPVDTYMNLVPMVVEQTSRGERAYDIFSRLLKERIVFVNGPVHDGMSQLVVAQLLHLEAENPSKEISMYINSPGGVVTSGLSIYDTMQYIKPKVSTLVVGQAASMGSLLLTAGEKGMRFSLPNSRIMVHQPSGGYQGQATDIMIHAQETQKLKDRLNQIYVKHTGQPLKKVVDALERDNFMDAEQAKEWGLIDEIVESRANEDTSK.

Serine 106 functions as the Nucleophile in the catalytic mechanism. Histidine 131 is a catalytic residue.

It belongs to the peptidase S14 family. Fourteen ClpP subunits assemble into 2 heptameric rings which stack back to back to give a disk-like structure with a central cavity, resembling the structure of eukaryotic proteasomes.

It is found in the cytoplasm. It carries out the reaction Hydrolysis of proteins to small peptides in the presence of ATP and magnesium. alpha-casein is the usual test substrate. In the absence of ATP, only oligopeptides shorter than five residues are hydrolyzed (such as succinyl-Leu-Tyr-|-NHMec, and Leu-Tyr-Leu-|-Tyr-Trp, in which cleavage of the -Tyr-|-Leu- and -Tyr-|-Trp bonds also occurs).. Its function is as follows. Cleaves peptides in various proteins in a process that requires ATP hydrolysis. Has a chymotrypsin-like activity. Plays a major role in the degradation of misfolded proteins. This chain is ATP-dependent Clp protease proteolytic subunit, found in Dinoroseobacter shibae (strain DSM 16493 / NCIMB 14021 / DFL 12).